The following is a 420-amino-acid chain: uncharacterized protein (420 aa).

Belongs to the asfivirus K421R family.

It localises to the virion. This is an uncharacterized protein from Ornithodoros (relapsing fever ticks).